The sequence spans 143 residues: Ribonuclease H (143 aa).

Residues 1–136 enclose the RNase H type-1 domain; it reads MQEIEIFCDG…CDSLAKLEAQ (136 aa). Asp9, Glu47, Asp69, and Asp128 together coordinate Mg(2+).

It belongs to the RNase H family. In terms of assembly, monomer. The cofactor is Mg(2+).

The protein resides in the cytoplasm. It catalyses the reaction Endonucleolytic cleavage to 5'-phosphomonoester.. In terms of biological role, endonuclease that specifically degrades the RNA of RNA-DNA hybrids. The sequence is that of Ribonuclease H from Helicobacter acinonychis (strain Sheeba).